A 342-amino-acid chain; its full sequence is MNNPIPSNLKSEAKKAAKILREFTEITSRNGPDKIIPAHVIAKAKGLAILSVIKAGFLVTARGGSGIVVARLPDGKWSAPSAIGIAGLGGGFEIGIEVSDLVIILNYDRAVEAFAKGGNLTLGGNLTVAVGPLGRNLEGNVALRSSAAVFTYCKSRGLFAGVSLEGSCLIERKETNRKFYCQDIRAYDILFGDTPRPAQAEDLYEILDSFTEKYENEGQRINARKAAREQRKSSAKELPPKPLSRPQQSSAPVQLNSGSQSNRNEYKLYPGLSSYHERVGNLNQPIEVTALYSFEGQQPGDLNFQAGDRITVISKTDSHFDWWEGKLRGQTGIFPANYVTMN.

A disordered region spans residues 218 to 266; that stretch reads GQRINARKAAREQRKSSAKELPPKPLSRPQQSSAPVQLNSGSQSNRNEY. The span at 226–239 shows a compositional bias: basic and acidic residues; it reads AAREQRKSSAKELP. Residues 245–263 are compositionally biased toward polar residues; that stretch reads RPQQSSAPVQLNSGSQSNR. The SH3 domain occupies 283–342; that stretch reads NQPIEVTALYSFEGQQPGDLNFQAGDRITVISKTDSHFDWWEGKLRGQTGIFPANYVTMN.

The protein belongs to the SH3YL1 family. As to quaternary structure, interacts with SH3D19.

This chain is SH3 domain-containing YSC84-like protein 1 (SH3YL1), found in Homo sapiens (Human).